The primary structure comprises 215 residues: Adenylate kinase (215 aa).

10–15 serves as a coordination point for ATP; the sequence is GAGKGT. Residues 30 to 59 form an NMP region; the sequence is STGDMFRAAMKNETEMGKLAKSFIDKGELV. AMP is bound by residues Thr31, Arg36, 57 to 59, 86 to 89, and Gln93; these read ELV and GYPR. The tract at residues 127 to 165 is LID; that stretch reads GRYICRNCGATYHKIFNPTKVEGTCDVCGSHDLYQRADD. Arg128 serves as a coordination point for ATP. Positions 131 and 134 each coordinate Zn(2+). ATP is bound at residue 137-138; it reads TY. Zn(2+) contacts are provided by Cys151 and Cys154. Positions 162 and 173 each coordinate AMP. Gln201 provides a ligand contact to ATP.

The protein belongs to the adenylate kinase family. As to quaternary structure, monomer.

Its subcellular location is the cytoplasm. It carries out the reaction AMP + ATP = 2 ADP. It participates in purine metabolism; AMP biosynthesis via salvage pathway; AMP from ADP: step 1/1. Functionally, catalyzes the reversible transfer of the terminal phosphate group between ATP and AMP. Plays an important role in cellular energy homeostasis and in adenine nucleotide metabolism. This chain is Adenylate kinase, found in Lactococcus lactis subsp. cremoris (strain SK11).